Consider the following 273-residue polypeptide: uncharacterized protein (273 aa).

An AB hydrolase-1 domain is found at 29-131; that stretch reads TLVCVHGFLS…VVLLCSSGYL (103 aa). Active-site residues include serine 102 and histidine 254.

Belongs to the DmpD/TodF/XylF esterase family.

This is an uncharacterized protein from Bacillus subtilis (strain 168).